Here is a 397-residue protein sequence, read N- to C-terminus: S-adenosylmethionine synthase (397 aa).

His17 lines the ATP pocket. Asp19 lines the Mg(2+) pocket. Glu45 is a K(+) binding site. Residues Glu58 and Gln101 each contribute to the L-methionine site. Positions 101-111 are flexible loop; it reads QSPDIAQGVDK. Residues 176–178, 243–244, Asp252, 258–259, and Lys279 each bind ATP; these read DGK, RF, and RK. Asp252 contributes to the L-methionine binding site. Position 283 (Lys283) interacts with L-methionine.

The protein belongs to the AdoMet synthase family. As to quaternary structure, homotetramer; dimer of dimers. Mg(2+) is required as a cofactor. Requires K(+) as cofactor.

It localises to the cytoplasm. It catalyses the reaction L-methionine + ATP + H2O = S-adenosyl-L-methionine + phosphate + diphosphate. It functions in the pathway amino-acid biosynthesis; S-adenosyl-L-methionine biosynthesis; S-adenosyl-L-methionine from L-methionine: step 1/1. Its function is as follows. Catalyzes the formation of S-adenosylmethionine (AdoMet) from methionine and ATP. The overall synthetic reaction is composed of two sequential steps, AdoMet formation and the subsequent tripolyphosphate hydrolysis which occurs prior to release of AdoMet from the enzyme. The protein is S-adenosylmethionine synthase of Staphylococcus aureus (strain MRSA252).